The primary structure comprises 158 residues: Probable deoxyuridine 5'-triphosphate nucleotidohydrolase (158 aa).

It belongs to the dUTPase family. Mg(2+) serves as cofactor.

It carries out the reaction dUTP + H2O = dUMP + diphosphate + H(+). Its pathway is pyrimidine metabolism; dUMP biosynthesis; dUMP from dCTP (dUTP route): step 1/2. Functionally, this enzyme is involved in nucleotide metabolism: it produces dUMP, the immediate precursor of thymidine nucleotides and it decreases the intracellular concentration of dUTP so that uracil cannot be incorporated into DNA. It does probably not deaminate dCTP. In Sulfolobus islandicus rod-shaped virus 1 (SIRV-1), this protein is Probable deoxyuridine 5'-triphosphate nucleotidohydrolase.